Consider the following 176-residue polypeptide: MDLPGPIHDFLLVFFGSGLILGGLGVILFTNPIFSAFSLGLVLVCISLFYIIANSQFVASAQLLIYVGAINVLIIFAVMFINGLEYDKNLRLFTLGDGMTLVICTGIFFLLITTILNTSGYGIIWTTKLNQILEQDLINNSQQIGIHLSTDFFPPFELISIILLVALIGAIAVARQ.

5 helical membrane passes run 10–30 (FLLVFFGSGLILGGLGVILFT), 33–53 (IFSAFSLGLVLVCISLFYIIA), 61–81 (AQLLIYVGAINVLIIFAVMFI), 92–112 (LFTLGDGMTLVICTGIFFLLI), and 152–172 (FFPPFELISIILLVALIGAIA).

Belongs to the complex I subunit 6 family. NDH is composed of at least 16 different subunits, 5 of which are encoded in the nucleus.

Its subcellular location is the plastid. The protein resides in the chloroplast thylakoid membrane. The catalysed reaction is a plastoquinone + NADH + (n+1) H(+)(in) = a plastoquinol + NAD(+) + n H(+)(out). It carries out the reaction a plastoquinone + NADPH + (n+1) H(+)(in) = a plastoquinol + NADP(+) + n H(+)(out). In terms of biological role, NDH shuttles electrons from NAD(P)H:plastoquinone, via FMN and iron-sulfur (Fe-S) centers, to quinones in the photosynthetic chain and possibly in a chloroplast respiratory chain. The immediate electron acceptor for the enzyme in this species is believed to be plastoquinone. Couples the redox reaction to proton translocation, and thus conserves the redox energy in a proton gradient. This Fagopyrum esculentum subsp. ancestrale (Wild buckwheat) protein is NAD(P)H-quinone oxidoreductase subunit 6, chloroplastic (ndhG).